A 946-amino-acid polypeptide reads, in one-letter code: Bifunctional glutamine synthetase adenylyltransferase/adenylyl-removing enzyme (946 aa).

The segment at 1 to 440 (MKPLSSPLQQ…VFNELIGDDE (440 aa)) is adenylyl removase. The tract at residues 449 to 946 (SEQWRELWQD…ASWQKWLVEE (498 aa)) is adenylyl transferase.

The protein belongs to the GlnE family. Mg(2+) serves as cofactor.

The enzyme catalyses [glutamine synthetase]-O(4)-(5'-adenylyl)-L-tyrosine + phosphate = [glutamine synthetase]-L-tyrosine + ADP. It catalyses the reaction [glutamine synthetase]-L-tyrosine + ATP = [glutamine synthetase]-O(4)-(5'-adenylyl)-L-tyrosine + diphosphate. In terms of biological role, involved in the regulation of glutamine synthetase GlnA, a key enzyme in the process to assimilate ammonia. When cellular nitrogen levels are high, the C-terminal adenylyl transferase (AT) inactivates GlnA by covalent transfer of an adenylyl group from ATP to specific tyrosine residue of GlnA, thus reducing its activity. Conversely, when nitrogen levels are low, the N-terminal adenylyl removase (AR) activates GlnA by removing the adenylyl group by phosphorolysis, increasing its activity. The regulatory region of GlnE binds the signal transduction protein PII (GlnB) which indicates the nitrogen status of the cell. The polypeptide is Bifunctional glutamine synthetase adenylyltransferase/adenylyl-removing enzyme (Escherichia coli O6:H1 (strain CFT073 / ATCC 700928 / UPEC)).